Here is an 831-residue protein sequence, read N- to C-terminus: V-type proton ATPase 116 kDa subunit a1 (831 aa).

The Cytoplasmic portion of the chain corresponds to 1 to 388 (MGELFRSEEM…DAYGIGSYRE (388 aa)). The helical transmembrane segment at 389-407 (INPAPYTIITFPFLFAVMF) threads the bilayer. The Vacuolar portion of the chain corresponds to 408–409 (GD). A helical membrane pass occupies residues 410–426 (FGHGILMTLFAVWMVVR). The Cytoplasmic segment spans residues 427–441 (ESRILSQKIDNELFS). Residues 442-471 (MMFSGRYIILLMGLFSTYTGLIYNDCFSKA) form a helical membrane-spanning segment. The Vacuolar segment spans residues 472–534 (LNLFGSSWSV…ATNKLTFLNS (63 aa)). Residues 535-554 (FKMKMSVILGIIHMIFGVAL) traverse the membrane as a helical segment. Residues 555–572 (SVLNHIYFKKPLNIYLSF) lie on the Cytoplasmic side of the membrane. A helical transmembrane segment spans residues 573-593 (IPEMIFMTTLFGYLVILIIYK). Residues 594–638 (WCAYDVSTSMVAPSLLIHFINMFLFSYQDTSLPMLYKGQMGLQCF) lie on the Vacuolar side of the membrane. A helical membrane pass occupies residues 639-658 (LVVCAIICVPWMLVLKPLIL). Over 659–718 (RRQYLRRKHLGTHNFGGIRVGNGPTEEDAEIIQHDQLSMHSDEEEEFDFGDTVVHQAIHT) the chain is Cytoplasmic. A helical membrane pass occupies residues 719–743 (IEYCLGCISNTASYLRLWALSLAHA). Residues 744–764 (QLSEVLWTMVMHIGLNIRSLG) lie on the Vacuolar side of the membrane. The chain crosses the membrane as a helical span at residues 765–803 (GGIALVFIFSAFATLTIAILLIMEGLSAFLHALRLHWVE). Topologically, residues 804–831 (FRNKFYMGTGFKFLPFSFETIWEGKFDD) are cytoplasmic.

This sequence belongs to the V-ATPase 116 kDa subunit family. V-ATPase is a heteromultimeric enzyme made up of two complexes: the ATP-hydrolytic V1 complex and the proton translocation V0 complex. The V1 complex consists of three catalytic AB heterodimers that form a heterohexamer, three peripheral stalks each consisting of EG heterodimers, one central rotor including subunits D and F, and the regulatory subunits C and H. The proton translocation complex V0 consists of the proton transport subunit a, a ring of proteolipid subunits c9c'', rotary subunit d, subunits e and f, and two accessory subunits.

The protein resides in the cytoplasmic vesicle. It localises to the clathrin-coated vesicle membrane. Its subcellular location is the secretory vesicle. The protein localises to the synaptic vesicle membrane. It is found in the melanosome. Subunit of the V0 complex of vacuolar(H+)-ATPase (V-ATPase), a multisubunit enzyme composed of a peripheral complex (V1) that hydrolyzes ATP and a membrane integral complex (V0) that translocates protons. V-ATPase is responsible for acidifying and maintaining the pH of intracellular compartments and in some cell types, is targeted to the plasma membrane, where it is responsible for acidifying the extracellular environment. Required for assembly and activity of the vacuolar ATPase. The polypeptide is V-type proton ATPase 116 kDa subunit a1 (atp6v0a1) (Xenopus laevis (African clawed frog)).